We begin with the raw amino-acid sequence, 314 residues long: Homoserine O-acetyltransferase (314 aa).

C142 acts as the Acyl-thioester intermediate in catalysis. The substrate site is built by K163 and S192. H235 acts as the Proton acceptor in catalysis. E237 is a catalytic residue. Substrate is bound at residue R249.

The protein belongs to the MetA family.

The protein resides in the cytoplasm. The catalysed reaction is L-homoserine + acetyl-CoA = O-acetyl-L-homoserine + CoA. The protein operates within amino-acid biosynthesis; L-methionine biosynthesis via de novo pathway; O-acetyl-L-homoserine from L-homoserine: step 1/1. Functionally, transfers an acetyl group from acetyl-CoA to L-homoserine, forming acetyl-L-homoserine. The sequence is that of Homoserine O-acetyltransferase from Streptococcus pneumoniae (strain JJA).